The sequence spans 961 residues: Phosphofurin acidic cluster sorting protein 1 (961 aa).

Positions 1-19 (MAERGGAGGGPGGAGGGSS) are enriched in gly residues. Disordered regions lie at residues 1 to 70 (MAER…SSST) and 76 to 95 (VAVA…RTPA). Position 2 is an N-acetylalanine (Ala2). Low complexity predominate over residues 20 to 30 (QRGSGVAQSPQ). At Ser28 the chain carries Phosphoserine. Over residues 31-46 (QQPPQQPSQPQQPTPP) the composition is skewed to pro residues. Thr44 is subject to Phosphothreonine. Low complexity predominate over residues 51–70 (ATSSSSSTSAAAASSSSSST). Tyr249 carries the phosphotyrosine modification. Residues 260-271 (GIKSKLSDRSPD) are compositionally biased toward basic and acidic residues. Disordered regions lie at residues 260-297 (GIKS…LHGQ) and 375-426 (NPSD…GKDT). The span at 274-291 (NYSEEEEESFSSEQEGSD) shows a compositional bias: acidic residues. The stretch at 351-375 (HVSREQIREVEEDLDELYDSLEMYN) forms a coiled coil. Ser377 and Ser379 each carry phosphoserine. Residues 404–426 (MSQSSSQTEIGSLNSKGSLGKDT) are compositionally biased toward polar residues. Phosphoserine is present on residues Ser428 and Ser493. 2 disordered regions span residues 475–540 (EKVK…HSTQ) and 758–802 (SPST…SMSS). Thr502 is subject to Phosphothreonine. Residues Ser517, Ser526, Ser527, Ser529, and Ser532 each carry the phosphoserine modification. Residues 768-802 (SPVVSLTVPSTSPPSSSGLSRDATATPPSSPSMSS) show a composition bias toward low complexity.

Belongs to the PACS family. Associates with AP-1 and AP-3 but not with AP-2 complexes. Interacts with FURIN. Forms a ternary complex with furin and AP-1. Interacts with PKD2 (via acidic region). Interacts with SORL1. Interacts with WDR37.

The protein resides in the golgi apparatus. It localises to the trans-Golgi network. Coat protein that is involved in the localization of trans-Golgi network (TGN) membrane proteins that contain acidic cluster sorting motifs. Controls the endosome-to-Golgi trafficking of furin and mannose-6-phosphate receptor by connecting the acidic-cluster-containing cytoplasmic domain of these molecules with the adapter-protein complex-1 (AP-1) of endosomal clathrin-coated membrane pits. Required for normal ER Ca2+ handling in lymphocytes. Together with WDR37, it plays an essential role in lymphocyte development, quiescence and survival. Required for stabilizing peripheral lymphocyte populations. The protein is Phosphofurin acidic cluster sorting protein 1 (Pacs1) of Rattus norvegicus (Rat).